A 461-amino-acid chain; its full sequence is Cysteine--tRNA ligase (461 aa).

Cys-29 is a Zn(2+) binding site. The 'HIGH' region signature appears at 31-41 (MTVYDFCHIGH). Zn(2+) is bound by residues Cys-210, His-235, and Glu-239. The 'KMSKS' region signature appears at 267 to 271 (KMSKS). Lys-270 serves as a coordination point for ATP.

It belongs to the class-I aminoacyl-tRNA synthetase family. Monomer. Zn(2+) serves as cofactor.

Its subcellular location is the cytoplasm. It catalyses the reaction tRNA(Cys) + L-cysteine + ATP = L-cysteinyl-tRNA(Cys) + AMP + diphosphate. The sequence is that of Cysteine--tRNA ligase from Ectopseudomonas mendocina (strain ymp) (Pseudomonas mendocina).